Reading from the N-terminus, the 239-residue chain is Small ribosomal subunit protein uS2 (239 aa).

This sequence belongs to the universal ribosomal protein uS2 family.

This Francisella tularensis subsp. novicida (strain U112) protein is Small ribosomal subunit protein uS2.